Consider the following 230-residue polypeptide: UPF0688 protein C1orf174 homolog (230 aa).

Disordered regions lie at residues M1–K85 and A97–S166. Positions R11 to R30 are enriched in low complexity. The segment covering D31 to H48 has biased composition (polar residues). Over residues K49 to S78 the composition is skewed to basic and acidic residues. A Phosphoserine modification is found at S180.

This sequence belongs to the UPF0688 family.

The protein localises to the nucleus. This is UPF0688 protein C1orf174 homolog from Mus musculus (Mouse).